The sequence spans 367 residues: Histidinol-phosphate aminotransferase 1 (367 aa).

K229 is subject to N6-(pyridoxal phosphate)lysine.

The protein belongs to the class-II pyridoxal-phosphate-dependent aminotransferase family. Histidinol-phosphate aminotransferase subfamily. Homodimer. Requires pyridoxal 5'-phosphate as cofactor.

The catalysed reaction is L-histidinol phosphate + 2-oxoglutarate = 3-(imidazol-4-yl)-2-oxopropyl phosphate + L-glutamate. Its pathway is amino-acid biosynthesis; L-histidine biosynthesis; L-histidine from 5-phospho-alpha-D-ribose 1-diphosphate: step 7/9. The chain is Histidinol-phosphate aminotransferase 1 from Idiomarina loihiensis (strain ATCC BAA-735 / DSM 15497 / L2-TR).